The primary structure comprises 481 residues: G-protein coupled receptor 37-like 1 (481 aa).

A signal peptide spans 1-24; that stretch reads MRWLWPLAVSLAVVLAVGPSEVSG. The Extracellular segment spans residues 25-134; that stretch reads AATLSLGGHR…ESSYSAYAVM (110 aa). Disordered regions lie at residues 30 to 55 and 76 to 107; these read LGGHRAKVQEQQSRPRRGTKDEGPKE and LQPTKPLVATSPNPDKDGATSESGQELRTNLT. The span at 95–107 shows a compositional bias: polar residues; the sequence is TSESGQELRTNLT. N105 is a glycosylation site (N-linked (GlcNAc...) asparagine). A helical transmembrane segment spans residues 135–155; the sequence is LLALVVFAVGIVGNLSVMCIV. The Cytoplasmic segment spans residues 156–167; sequence WHSYYLKSAWNS. A helical transmembrane segment spans residues 168 to 188; it reads ILASLALWDFLVLFFCLPIVI. The Extracellular portion of the chain corresponds to 189–205; it reads FNEITKQRLLGDVSCRA. The cysteines at positions 203 and 286 are disulfide-linked. A helical transmembrane segment spans residues 206–226; sequence VPFMEVSSLGVTTFSLCALGI. The Cytoplasmic portion of the chain corresponds to 227–251; that stretch reads DRFHVATSTLPKVRPIERCQSILAK. The chain crosses the membrane as a helical span at residues 252–272; it reads LAVIWVGSMMLAVPELLLWQL. Residues 273-310 lie on the Extracellular side of the membrane; the sequence is AQEPTPTMGTVDSCIMKPSADLPESLYSLVMTYQNARM. The chain crosses the membrane as a helical span at residues 311-331; sequence WWYFGCYFCLPILFTVTCQLV. Residues 332 to 360 are Cytoplasmic-facing; sequence TWRVRGPPGRKPECRAGRHEQCESQLNST. A helical transmembrane segment spans residues 361–381; it reads VVGLTVVYAFCTLPENICNIV. Topologically, residues 382–398 are extracellular; the sequence is VAYLSTELTRQTLDLLG. The chain crosses the membrane as a helical span at residues 399–419; the sequence is LINQFSTFFKGAITPVLLLCI. Over 420 to 481 the chain is Cytoplasmic; the sequence is CRPLGQAFLD…PPLLPLGTPC (62 aa). S471 carries the post-translational modification Phosphoserine. Phosphothreonine is present on T479.

It belongs to the G-protein coupled receptor 1 family. As to quaternary structure, interacts with the PTCH1 receptor. Post-translationally, undergoes metalloprotease-mediated cleavage which reduces its constitutive activity. In terms of processing, ubiquitinated. In terms of tissue distribution, highly expressed in brain.

It is found in the cell membrane. The protein resides in the cell projection. Its subcellular location is the cilium membrane. G-protein coupled receptor. Has been shown to bind the neuroprotective and glioprotective factor prosaposin (PSAP), leading to endocytosis followed by an ERK phosphorylation cascade. However, other studies have shown that prosaposin does not increase activity. It has been suggested that GPR37L1 is a constitutively active receptor which signals through the guanine nucleotide-binding protein G(s) subunit alpha. Participates in the regulation of postnatal cerebellar development by modulating the Shh pathway. Regulates baseline blood pressure in females and protects against cardiovascular stress in males. Mediates inhibition of astrocyte glutamate transporters and reduction in neuronal N-methyl-D-aspartate receptor activity. The sequence is that of G-protein coupled receptor 37-like 1 (Gpr37l1) from Rattus norvegicus (Rat).